A 546-amino-acid polypeptide reads, in one-letter code: CTP synthase (546 aa).

The amidoligase domain stretch occupies residues 1-266 (MAKYYIFITG…DSYVCDRFCI (266 aa)). CTP is bound at residue serine 14. Serine 14 lines the UTP pocket. Residues 15–20 (SLGKGI) and aspartate 72 contribute to the ATP site. Residues aspartate 72 and glutamate 140 each coordinate Mg(2+). Residues 147–149 (DIE), 187–192 (KTKPTQ), and lysine 223 contribute to the CTP site. Residues 187–192 (KTKPTQ) and lysine 223 contribute to the UTP site. In terms of domain architecture, Glutamine amidotransferase type-1 spans 291–544 (NIGIIGKYTE…VKAAFDFKNK (254 aa)). Residue glycine 352 coordinates L-glutamine. Cysteine 379 acts as the Nucleophile; for glutamine hydrolysis in catalysis. L-glutamine is bound by residues 380–383 (LGMQ), glutamate 403, and arginine 470. Catalysis depends on residues histidine 517 and glutamate 519.

It belongs to the CTP synthase family. As to quaternary structure, homotetramer.

It catalyses the reaction UTP + L-glutamine + ATP + H2O = CTP + L-glutamate + ADP + phosphate + 2 H(+). The enzyme catalyses L-glutamine + H2O = L-glutamate + NH4(+). It carries out the reaction UTP + NH4(+) + ATP = CTP + ADP + phosphate + 2 H(+). Its pathway is pyrimidine metabolism; CTP biosynthesis via de novo pathway; CTP from UDP: step 2/2. Allosterically activated by GTP, when glutamine is the substrate; GTP has no effect on the reaction when ammonia is the substrate. The allosteric effector GTP functions by stabilizing the protein conformation that binds the tetrahedral intermediate(s) formed during glutamine hydrolysis. Inhibited by the product CTP, via allosteric rather than competitive inhibition. Functionally, catalyzes the ATP-dependent amination of UTP to CTP with either L-glutamine or ammonia as the source of nitrogen. Regulates intracellular CTP levels through interactions with the four ribonucleotide triphosphates. The sequence is that of CTP synthase from Wigglesworthia glossinidia brevipalpis.